Here is a 148-residue protein sequence, read N- to C-terminus: Probable histone H2B.1 (148 aa).

The segment covering 1–32 has biased composition (basic and acidic residues); sequence MAPKGEKKPAEKKPAEEKKSTVAEKAPAEKKP. The segment at 1-57 is disordered; sequence MAPKGEKKPAEKKPAEEKKSTVAEKAPAEKKPKAGKKLPKEGGSAAGEKKKKRSKKS. 3 positions are modified to N6-acetyllysine: K7, K36, and K37. K144 is covalently cross-linked (Glycyl lysine isopeptide (Lys-Gly) (interchain with G-Cter in ubiquitin)).

This sequence belongs to the histone H2B family. The nucleosome is a histone octamer containing two molecules each of H2A, H2B, H3 and H4 assembled in one H3-H4 heterotetramer and two H2A-H2B heterodimers. The octamer wraps approximately 147 bp of DNA. Can be acetylated to form H2BK6ac, H2BK33ac and H2BK34ac. Post-translationally, monoubiquitinated to form H2BK143ub1; may give a specific tag for epigenetic transcriptional activation.

It is found in the nucleus. The protein localises to the chromosome. Core component of nucleosome. Nucleosomes wrap and compact DNA into chromatin, limiting DNA accessibility to the cellular machineries which require DNA as a template. Histones thereby play a central role in transcription regulation, DNA repair, DNA replication and chromosomal stability. DNA accessibility is regulated via a complex set of post-translational modifications of histones, also called histone code, and nucleosome remodeling. The protein is Probable histone H2B.1 of Medicago truncatula (Barrel medic).